A 643-amino-acid chain; its full sequence is RNA-binding protein RO60 (643 aa).

The TROVE domain maps to 63–473 (VENNAGGFVF…AFVNAPPTGK (411 aa)). The RNA-binding stretch occupies residues 186–390 (RTPTHLFEFV…SMPMTAMIRN (205 aa)). The VWFA-like domain stretch occupies residues 465–643 (FVNAPPTGKR…IVHEFVTGKI (179 aa)). Positions 482, 484, and 549 each coordinate a divalent metal cation.

Belongs to the Ro 60 kDa family.

Its subcellular location is the cytoplasm. RNA-binding protein that binds to misfolded non-coding RNAs, pre-5S rRNA, and several small cytoplasmic RNA molecules known as Y RNAs. This chain is RNA-binding protein RO60, found in Caenorhabditis elegans.